The sequence spans 632 residues: tRNA 5-methylaminomethyl-2-thiouridine biosynthesis bifunctional protein MnmC (632 aa).

Positions 1–247 (MNSRIFPAAM…KWHMTLGQRL (247 aa)) are tRNA (mnm(5)s(2)U34)-methyltransferase. The tract at residues 267–632 (VGAGLAGAAV…TDLLAQIAPR (366 aa)) is FAD-dependent cmnm(5)s(2)U34 oxidoreductase.

In the N-terminal section; belongs to the methyltransferase superfamily. tRNA (mnm(5)s(2)U34)-methyltransferase family. It in the C-terminal section; belongs to the DAO family. The cofactor is FAD.

The protein resides in the cytoplasm. It carries out the reaction 5-aminomethyl-2-thiouridine(34) in tRNA + S-adenosyl-L-methionine = 5-methylaminomethyl-2-thiouridine(34) in tRNA + S-adenosyl-L-homocysteine + H(+). Catalyzes the last two steps in the biosynthesis of 5-methylaminomethyl-2-thiouridine (mnm(5)s(2)U) at the wobble position (U34) in tRNA. Catalyzes the FAD-dependent demodification of cmnm(5)s(2)U34 to nm(5)s(2)U34, followed by the transfer of a methyl group from S-adenosyl-L-methionine to nm(5)s(2)U34, to form mnm(5)s(2)U34. The polypeptide is tRNA 5-methylaminomethyl-2-thiouridine biosynthesis bifunctional protein MnmC (Bordetella bronchiseptica (strain ATCC BAA-588 / NCTC 13252 / RB50) (Alcaligenes bronchisepticus)).